A 516-amino-acid polypeptide reads, in one-letter code: AMP phosphorylase (516 aa).

AMP-binding positions include Gly169, 195-200 (SRAITG), and Thr204. Asp257 functions as the Proton donor in the catalytic mechanism. AMP contacts are provided by Ser265 and Lys289.

Belongs to the thymidine/pyrimidine-nucleoside phosphorylase family. Type 2 subfamily.

It catalyses the reaction AMP + phosphate = alpha-D-ribose 1,5-bisphosphate + adenine. It carries out the reaction CMP + phosphate = cytosine + alpha-D-ribose 1,5-bisphosphate. The catalysed reaction is UMP + phosphate = alpha-D-ribose 1,5-bisphosphate + uracil. Functionally, catalyzes the conversion of AMP and phosphate to adenine and ribose 1,5-bisphosphate (R15P). Exhibits phosphorylase activity toward CMP and UMP in addition to AMP. Functions in an archaeal AMP degradation pathway, together with R15P isomerase and RubisCO. This Methanospirillum hungatei JF-1 (strain ATCC 27890 / DSM 864 / NBRC 100397 / JF-1) protein is AMP phosphorylase.